A 100-amino-acid polypeptide reads, in one-letter code: NADH-quinone oxidoreductase subunit K (100 aa).

Transmembrane regions (helical) follow at residues 4–24 (LQHG…GLVI), 28–48 (LLFM…AFVV), and 60–80 (VMYI…LALL).

The protein belongs to the complex I subunit 4L family. As to quaternary structure, NDH-1 is composed of 13 different subunits. Subunits NuoA, H, J, K, L, M, N constitute the membrane sector of the complex.

It is found in the cell inner membrane. It carries out the reaction a quinone + NADH + 5 H(+)(in) = a quinol + NAD(+) + 4 H(+)(out). In terms of biological role, NDH-1 shuttles electrons from NADH, via FMN and iron-sulfur (Fe-S) centers, to quinones in the respiratory chain. The immediate electron acceptor for the enzyme in this species is believed to be ubiquinone. Couples the redox reaction to proton translocation (for every two electrons transferred, four hydrogen ions are translocated across the cytoplasmic membrane), and thus conserves the redox energy in a proton gradient. The chain is NADH-quinone oxidoreductase subunit K from Shigella sonnei (strain Ss046).